Here is a 604-residue protein sequence, read N- to C-terminus: Arginine--tRNA ligase (604 aa).

Residues 142–152 (PNIAKEMHVGH) carry the 'HIGH' region motif.

It belongs to the class-I aminoacyl-tRNA synthetase family. In terms of assembly, monomer.

It is found in the cytoplasm. The catalysed reaction is tRNA(Arg) + L-arginine + ATP = L-arginyl-tRNA(Arg) + AMP + diphosphate. The chain is Arginine--tRNA ligase from Prochlorococcus marinus (strain MIT 9312).